A 235-amino-acid chain; its full sequence is Thaumatin II (235 aa).

The N-terminal stretch at 1–22 (MAATTCFFFLFPFLLLLTLSRA) is a signal peptide. Intrachain disulfides connect cysteine 31-cysteine 226, cysteine 78-cysteine 88, cysteine 93-cysteine 99, cysteine 143-cysteine 215, cysteine 148-cysteine 199, cysteine 156-cysteine 167, cysteine 171-cysteine 180, and cysteine 181-cysteine 186. A propeptide spans 230–235 (LELEDE) (removed in mature form).

Belongs to the thaumatin family.

The protein localises to the cytoplasmic vesicle. Functionally, taste-modifying protein; intensely sweet-tasting. It is 100000 times sweeter than sucrose on a molar basis. This chain is Thaumatin II, found in Thaumatococcus daniellii (Katemfe).